The primary structure comprises 4730 residues: MEDQQINVDSPTSGTNTPPVVTPTTSVISEQTLEETVKYLCKICPTLLDGDQSVFQNNLSNQIPPENMNKLKKFISDSKIPVLLIQKTNPTINSSNQTSTTTSSSSSSDDNTLTSSQQQSKESFNFEIEVKFGGENKSTLAIVKRIPESIVEYSSNKSIASQLQVLNLGDGSPMDTLHNYIHNSVAPFVRSYILSASKDDATTPSGGSADKSITSQNLDKEMKQSIGAVNQKIAELEISLYNCKQQVQIPEVTLAINPEIKSISKRLKETTGRTIKPDDLGDKASSPEFLNLLQAGTTTWAKNIQNVTKHNLIENLPSDVSTSQEINFWIELETSLQNIDQQLKSPEVEVTLATLRQAKRFIASAPFETDTIGVRKAMDKVQSYKTLFKDFPITPLLTATDLDSISSSVAAIFSHLKKTKNPYYPIPRYLSFLEAIGRDMCNKVYQILRQKNLMNIDYNDFEHLNRSVRALFTLWDDQFGAFRDILRDLAKKRGNERIPLIVNIDNRIQLVIIKIGKFRKQHEDLKNVVSNVLPGSQLGGGVVQTNTSNPTSPQKQEINAIEEINQAYLEFKEIDVLQLSKEGEEIWDAVVKRYNSRTDRVETYITVKLRDRLATAKNANEMFRVYQKFKDLLKRPKIRGATHEYESQLIERVKEDIRVLHDKFKMQYNNSEAYYMSQLRDLPPVSGAIIWARQIERQLDTYMKRVANVLGDSWESDAEGQKLKSESDQFRHKLNTDHIFSKWADETEKRSFDISGRILTIVKRGNKLALDINFDSHIIMLFKEVRNLQWLGFRVPLKISFISQGAKQVYPFAVSLKETLRTYAQTSGKVTPEFSTLVASYKRDVQANITEGFRLKWETIPKVDPYVRKLSTSINNFRDKVDDLIVKYSEIKKQLDGLKSCPFKSESFNEIIANIQKVVDELNLANYSNLPQWVTQLDAQVESMLIERLIDAINSWVQLIEGKEDQKDSQSTSGSSNKGGKLNRMNYSIRNKSDEENSSDLTQPQQSQQQQQTISIKPKLEKTIHEIVIRNQILSLSPPLEVARVNWIDQLHSWLNICCDLPRIQSSRYDESAMVHRGGVDSKKQSTFRDMLPKLPQGSLESAYSAITNKLEQVQQYVSIWLQYQSLWDMDSSFVYSKLGDDLNKWQLLLNQIKKSRSTFDNSSTEKQFGPLTIDYTQVQASVNNKYDYWHKDILGHFGSKLAEKMNQFYETISSSRQELEKLSVETVSTEEAVHFIIQIQDMKKKLSSWEADLRYYRTGQDLLQRQRFSFPNDWLDCERVEGEWSAFNEILNRKNATISEAIPQLQAKILQESKSINDRIKDFIDEWTANKPLQGSIKHSTALETLKIFEGRLIRLREESDRLSKAKQALDLTDTTGSSSSDQDRLVPVEEEIQDLKAVWVELSNTWQEIDSLKETAWSAIIPRKVRKSLEDTLQKLKNLPNRIRQYSAFDHAQNLIKIYLKGNAIITDLHSEAIKDRHWKILKKRLNTNWIITELTLGSIWDSDLARNENIYREVITAAQGEIALEEFLKGVREFWTTLELDLVNYQRKCKLVRGWDDLFNKLAEHLNSISAMKMSPYYKVFEEEANHWDDRLNKVRSLLDVWIDVQRRWVYLEGIFSGSGDINQLLPAESTRFKSINSEFIAILKKVSGAPLILEVLAIERIQQTMERLSDLLGKVQKALGEYLERQRSAFARFYFVGDEDLLEIIGNSKDIIKIQKHFRKMFAGLANLTLDDEKTTIIGMSSAEGETVTFKKPISIANGPKIHEWLTMVESEMKSTLATLLSESLQHFNQVDVNDHSKYSEWVDNYPTQLVLLTSQIVWSTQVDQALGGGTLQQSKIQEQLQSIEQTTQMILNNLADSVLQDLSAQKRKKFEHLITELVHQRDVVRQLQKCKNLTGNKDFDWLYHMRYYYDATQENVLHKLVIHMANATFYYGFEYLGIGERLVQTPLTDRCYLTLTQALESRMGGNPFGPAGTGKTETVKALGSQLGRFVLVFCCDEGFDLQAMSRIFVGLCQCGAWGCFDEFNRLEERILSAVSQQIQTIQVALKENSKEVELLGGKNISLHQDMGIFVTMNPGYAGRSNLPDNLKKLFRSMAMIKPDREMIAQVMLYSQGFKTAEVLAGKIVPLFKLCQEQLSAQSHYDFGLRALKSVLVSAGGIKRKCQPPQLPPITDAESKTKADQIYCQYEIGVLLNSINDTMIPKLVADDIPLIQSLLLDVFPGSQLQPIQMDQLRKKIQEIAKQRHLVTKQEWVEKILQLHQILNINHGVMMVGPSGGGKTTSWEVYLEAIEQVDNIKSEAHVMDPKAITKDQLFGSLDLTTREWTDGLFTATLRRIIDNVRGESTKRHWIIFDGDVDPEWVENLNSLLDDNKLLTLPNGERLALPNNVRVMFEVQDLKYATLATISRCGMVWFSEEILTTQMIFQNYLDTLSNEPFDPQEKEQQKRNENAQLQQQQQTTITSPILTSPPTTSSSSRSTTSTTSMIPAGLKVQKECAAIISQYFEPGGLVHKVLEDAGQRPHIMDFTRLRVLNSFFSLMNRSIVNVIEYNQLHSDFPMSPENQSNYITNRLLYSLMWGLGGSMGLVERENFSKFIQTIAITPVPANTIPLLDYSVSIDDANWSLWKNKVPSVEVETHKVASPDVVIPTVDTTRHVDVLHAWLSEHRPLILCGPPGSGKTMTLTSTLRAFPDFEVVSLNFSSATTPELLLKTFDHHCEYKRTPSGETVLRPTQLGKWLVVFCDEINLPSTDKYGTQRVITFIRQMVEKGGFWRTSDHTWIKLDKIQFVGACNPPTDAGRVQLTHRFLRHAPILLVDFPSTSSLTQIYGTFNRALMKLLPNLRSFADNLTDAMVEFYSESQKRFTPDIQAHYIYSPRELSRWDRALLEAIQTMDGCTLEGLVRLWAHEALRLFQDRLVETEEKEWTDKKIDEVALKHFPSVNLDALKRPILYSNWLTKDYQPVNRSDLREYVKARLKVFYEEELDVPLVLFNEVLDHILRIDRVFRQPQGHALLIGVSGGGKSVLSRFVAWMNGLSIYTIKVNNNYKSSDFDDDLRMLLKRAGCKEEKICFIFDESNVLESSFLERMNTLLAGGEVPGLFEGEEFTALMHACKETAQRNGLILDSEEELYKYFTSQVRRNLHVVFTMNPASPDFHNRSATSPALFNRCVLDWFGEWSPEALFQVGSEFTRNLDLENPQYIAPPVFIQEAEIMGNNLMAIPPSHRDAVVSSLVYIHQTIGEANIRLLKRQGRQNYVTPRHYLDFINQVVLLINEKRDQLEEEQLHLNIGLKKLRDTEAQVKDLQVSLAQKNRELDVKNEQANQKLKQMVQDQQAAEIKQKDARELQVQLDVRNKEIAVQKVKAYADLEKAEPAIIEAQEAVSTIKKKHLDEIKSLPKPPTPVKLAMEAVCLMLGGKKLEWADIRKKIMEPNFITSIINYDTKKMMTPKIREAITKGYLEDPGFDYETVNRASKACGPLVKWATAQTYYSEILDRIKPLREEVEQLENAANELKLKQDEIVATITALEKSIATYKEEYATLIRETEQIKTESSKVKNKVDRSIALLDNLNSERGRWEQQSENFNTQMSTVVGDVVLASAFLAYIGFFDQNFRTDLMRKWMIRLDSVGIKFKSDLSVPSFLSKPEERLNWHANSLPSDELCIENAIMLKRFNRYPLVIDPSGQAMEFLMNQYADKKITKTSFLDSSFMKNLESALRFGCPLLVQDVENIDPVLNPVLNKEIRKKGGRILIRLGDQDVDFSPSFMIFLFTRDPTAHFTPDLCSRVTFVNFTVTPSSLQSQCLHEALKTERPDTHKKRSDLLKIQGEFQVKLRILEKSLLNALSQASGNILDDDSVISTLETLKKETTEIALKVEETETVMQEISEVSALYNPMALSCSRVYFAMEELSQFHLYQFSLRAFLDIFYNLLNNNPNLVDKKDPNERLVYLSKDIFSMTFNRVTRTLLNDDKLTFALQLTIISVKGTSNEIEESEWDFLLKGGDNLTSIKETIPQLDSLLSTTQQKWLICLRQQVPSFSKLVDHIQQNSSDWKQFFGKDQVGEPIIPESWIVAQAQLSNQQSTIVSNFRKILLMKAFHSDRVLQYSHSFVCSVFGEDFLNTQELDMANIVEKEVKSSSPLLLCSVPGYDASSKVDDLALQLHKQYKSFAIGSPEGFELAEKSIYAAAKSGTWVLLKNIHLAPQWLVQLEKKLHSLSPHPSFRLFMTSEIHPALPANLLRMSNVFSYENPPGVKANLLHTFIGIPATRMDKQPAERSRIYFLLAWFHAIIQERLRYIPLGWTKFFEFNDADLRGALDSIDYWVDLYSKGRSNIDPDKIPWIAVRTILGSTIYGGRIDNEFDMRLLYSFLEQLFTPSAFNPDFPLVPSIGLSVPEGTTRAHFMKWIEALPEISTPIWLGLPENAESLLLSNKARKMINDLQKMQSSEEDGEDDQVSGSSKKESSSSSSEDKGKAKLRATITEWTKLLPKPLKQLKRTTQNIKDPLFRCFEREISTGGKLVKKITNDLANLLELISGNIKSTNYLRSLTTSISKGIVPKEWKWYSVPETISLSVWISDFSKRMQQLSEISESSDYSSIQVWLGGLLNPEAYITATRQSASQLNGWSLENLRLHASSLGKISSEGGASFNVKGMALEGAVWNNDQLTPTDILSTPISIATLTWKDKDDPIFNNSSSKLSVPVYLNETRSELLFSIDLPYDQSTSKQNWYQRSVSISSWKSDI.

Disordered regions lie at residues 1–23 (MEDQ…VVTP) and 91–120 (TINS…QQQS). A stem region spans residues 1–1935 (MEDQQINVDS…VIHMANATFY (1935 aa)). Positions 10–23 (SPTSGTNTPPVVTP) are enriched in low complexity. The stretch at 867–900 (VRKLSTSINNFRDKVDDLIVKYSEIKKQLDGLKS) forms a coiled coil. Positions 964-1016 (EDQKDSQSTSGSSNKGGKLNRMNYSIRNKSDEENSSDLTQPQQSQQQQQTISI) are disordered. Residues 969–978 (SQSTSGSSNK) show a composition bias toward polar residues. The segment covering 1002 to 1016 (TQPQQSQQQQQTISI) has biased composition (low complexity). Coiled coils occupy residues 1204-1224 (EKMN…EKLS), 1343-1372 (ALET…QALD), 1425-1441 (RKVR…LKNL), and 1661-1689 (AIER…YLER). AAA regions lie at residues 1936-2158 (YGFE…VLVS), 2238-2531 (KKIQ…FTRL), 2635-2885 (EVET…WDRA), and 2978-3252 (VFYE…QGRQ). 1974–1981 (GPAGTGKT) is a binding site for ATP. Residues 2231–2253 (IQMDQLRKKIQEIAKQRHLVTKQ) adopt a coiled-coil conformation. An ATP-binding site is contributed by 2276 to 2283 (GPSGGGKT). The tract at residues 2437 to 2486 (EPFDPQEKEQQKRNENAQLQQQQQTTITSPILTSPPTTSSSSRSTTSTTS) is disordered. A compositionally biased stretch (basic and acidic residues) spans 2441-2451 (PQEKEQQKRNE). Residues 2442-2462 (QEKEQQKRNENAQLQQQQQTT) are a coiled coil. Low complexity predominate over residues 2454-2486 (QLQQQQQTTITSPILTSPPTTSSSSRSTTSTTS). ATP contacts are provided by residues 2674–2681 (GPPGSGKT) and 3016–3023 (GVSGGGKS). Coiled-coil stretches lie at residues 3271–3349 (INEK…VQLD), 3483–3585 (AQTY…NTQM), and 3854–3881 (TLET…EISE). The stalk stretch occupies residues 3271–3585 (INEKRDQLEE…QQSENFNTQM (315 aa)). AAA stretches follow at residues 3638-3867 (LSKP…EIAL) and 4098-4312 (SHSF…SIDY). The disordered stretch occupies residues 4432–4465 (KMQSSEEDGEDDQVSGSSKKESSSSSSEDKGKAK). Over residues 4449 to 4463 (SKKESSSSSSEDKGK) the composition is skewed to basic and acidic residues.

This sequence belongs to the dynein heavy chain family. In terms of assembly, consists of at least two heavy chains and a number of intermediate and light chains.

The protein resides in the cytoplasm. It localises to the cytoskeleton. Functionally, cytoplasmic dynein acts as a motor for the intracellular retrograde motility of vesicles and organelles along microtubules. Dynein has ATPase activity; the force-producing power stroke is thought to occur on release of ADP. The sequence is that of Dynein heavy chain, cytoplasmic (dhcA) from Dictyostelium discoideum (Social amoeba).